The following is a 121-amino-acid chain: Putative iron-sulfur cluster insertion protein ErpA (121 aa).

Residues Cys-49, Cys-113, and Cys-115 each coordinate iron-sulfur cluster.

This sequence belongs to the HesB/IscA family. In terms of assembly, homodimer. The cofactor is iron-sulfur cluster.

In terms of biological role, required for insertion of 4Fe-4S clusters. This chain is Putative iron-sulfur cluster insertion protein ErpA, found in Paracidovorax citrulli (strain AAC00-1) (Acidovorax citrulli).